The sequence spans 688 residues: Glycine--tRNA ligase beta subunit (688 aa).

This sequence belongs to the class-II aminoacyl-tRNA synthetase family. As to quaternary structure, tetramer of two alpha and two beta subunits.

Its subcellular location is the cytoplasm. The enzyme catalyses tRNA(Gly) + glycine + ATP = glycyl-tRNA(Gly) + AMP + diphosphate. The sequence is that of Glycine--tRNA ligase beta subunit from Psychromonas ingrahamii (strain DSM 17664 / CCUG 51855 / 37).